We begin with the raw amino-acid sequence, 545 residues long: Chaperonin GroEL (545 aa).

Residues T29–P32, K50, D86–T90, G414, D477–A479, and D493 each bind ATP.

The protein belongs to the chaperonin (HSP60) family. In terms of assembly, forms a cylinder of 14 subunits composed of two heptameric rings stacked back-to-back. Interacts with the co-chaperonin GroES.

It is found in the cytoplasm. It catalyses the reaction ATP + H2O + a folded polypeptide = ADP + phosphate + an unfolded polypeptide.. In terms of biological role, together with its co-chaperonin GroES, plays an essential role in assisting protein folding. The GroEL-GroES system forms a nano-cage that allows encapsulation of the non-native substrate proteins and provides a physical environment optimized to promote and accelerate protein folding. In Campylobacter jejuni subsp. jejuni serotype O:2 (strain ATCC 700819 / NCTC 11168), this protein is Chaperonin GroEL.